Reading from the N-terminus, the 76-residue chain is Amyloid protein A (76 aa).

The protein belongs to the SAA family. As to expression, expressed by the liver; secreted in plasma.

Its subcellular location is the secreted. Major acute phase reactant. Apolipoprotein of the HDL complex. The protein is Amyloid protein A (SAA1) of Macaca mulatta (Rhesus macaque).